The primary structure comprises 258 residues: NAD(P)H-hydrate epimerase (258 aa).

Residues 15–244 (AFQLDQELMS…RIAKEYGIED (230 aa)) enclose the YjeF N-terminal domain. Position 75–79 (75–79 (NNGGD)) interacts with (6S)-NADPHX. K(+) contacts are provided by Asn-76 and Asp-145. (6S)-NADPHX is bound by residues 149–155 (GFSFKPP) and Asp-181. Ser-184 lines the K(+) pocket.

This sequence belongs to the NnrE/AIBP family. Requires K(+) as cofactor.

It localises to the cytoplasm. Its subcellular location is the mitochondrion. It catalyses the reaction (6R)-NADHX = (6S)-NADHX. It carries out the reaction (6R)-NADPHX = (6S)-NADPHX. Catalyzes the epimerization of the S- and R-forms of NAD(P)HX, a damaged form of NAD(P)H that is a result of enzymatic or heat-dependent hydration. This is a prerequisite for the S-specific NAD(P)H-hydrate dehydratase to allow the repair of both epimers of NAD(P)HX. This is NAD(P)H-hydrate epimerase from Candida albicans (strain WO-1) (Yeast).